Reading from the N-terminus, the 821-residue chain is BDNF/NT-3 growth factors receptor (821 aa).

An N-terminal signal peptide occupies residues 1-31 (MSPWLKWHGPAMARLWGLCLLVLGFWRASLA). 2 disulfide bridges follow: cysteine 32–cysteine 38 and cysteine 36–cysteine 45. An LRRNT domain is found at 32–61 (CPTSCKCSSARIWCTEPSPGIVAFPRLEPN). Residues 32-429 (CPTSCKCSSA…DVADQSNREH (398 aa)) lie on the Extracellular side of the membrane. Residues asparagine 67, asparagine 95, and asparagine 121 are each glycosylated (N-linked (GlcNAc...) asparagine). 2 LRR repeats span residues 92 to 113 (GLRNLTIVDSGLKFVAYKAFLK) and 116 to 137 (NLRHINFTRNKLTSLSRRHFRH). Residues 148–196 (NPFTCSCDIMWLKTLQETKSSPDTQDLYCLNESSKNMPLANLQIPNCGL) enclose the LRRCT domain. 2 disulfides stabilise this stretch: cysteine 152–cysteine 176 and cysteine 154–cysteine 194. Residues asparagine 178, asparagine 205, asparagine 241, asparagine 254, asparagine 280, asparagine 325, asparagine 338, asparagine 350, and asparagine 411 are each glycosylated (N-linked (GlcNAc...) asparagine). 2 Ig-like C2-type domains span residues 197-282 (PSAR…VNLT) and 301-365 (WCIP…MAKN). Cysteine 218 and cysteine 266 are disulfide-bonded. Cysteine 302 and cysteine 345 are disulfide-bonded. A helical transmembrane segment spans residues 430–453 (LSVYAVVVIASVVGFCLLVMLLLL). Positions 454-465 (KLARHSKFGMKG) are interaction with MAPK8IP3/JIP3. Residues 454–821 (KLARHSKFGM…ASPVYLDILG (368 aa)) are Cytoplasmic-facing. A disordered region spans residues 474–497 (DDSASPLHHISNGSNTPSSSEGGP). Over residues 484–494 (SNGSNTPSSSE) the composition is skewed to polar residues. A Phosphotyrosine modification is found at tyrosine 515. Residues 537-806 (IVLKRELGEG…KNIKSIHTLL (270 aa)) enclose the Protein kinase domain. ATP is bound by residues 543–551 (LGEGAFGKV) and lysine 571. The active-site Proton acceptor is the aspartate 675. Phosphotyrosine; by autocatalysis occurs at positions 701, 705, 706, and 816.

Belongs to the protein kinase superfamily. Tyr protein kinase family. Insulin receptor subfamily. Exists in a dynamic equilibrium between monomeric (low affinity) and dimeric (high affinity) structures. Interacts (phosphorylated upon activation by BDNF) with SHC1; mediates SHC1 phosphorylation and activation. Interacts (phosphorylated upon activation by BDNF) with PLCG1 and/or PLCG2; mediates PLCG1 phosphorylation and activation. Interacts with SH2B1 and SH2B2. Interacts with NGFR; may regulate the ligand specificity of the receptor. Interacts with SORCS2; this interaction is important for normal targeting to post-synaptic densities in response to high-frequency stimulation. Interacts (phosphorylated upon ligand-binding) with SH2D1A; regulates NTRK2. Interacts with SQSTM1 and KIDINS220. Interacts (phosphorylated upon ligand-binding) with FRS2; activates the MAPK signaling pathway. Interacts with APPL1. Interacts with MAPK8IP3/JIP3 and KLC1; interaction with KLC1 is mediated by MAPK8IP3/JIP3. Interacts with SORL1; this interaction facilitates NTRK2 trafficking between synaptic plasma membranes, postsynaptic densities and cell soma, hence positively regulates BDNF signaling. Interacts with SLITRK2. Post-translationally, phosphorylated. Undergoes ligand-mediated autophosphorylation that is required for interaction with SHC1 and PLCG1 and other downstream effectors. Some isoforms are not phosphorylated. Ubiquitinated. Undergoes polyubiquitination upon activation; regulated by NGFR. Ubiquitination regulates the internalization of the receptor. Expressed in the brain, in neurons (at protein level). Detected in hippocampus (at protein level). Widely expressed in the central and peripheral nervous system. The different forms are differentially expressed in various cell types. Isoform GP95-TRKB is specifically expressed in glial cells.

The protein resides in the cell membrane. Its subcellular location is the endosome membrane. It is found in the early endosome membrane. It localises to the cell projection. The protein localises to the axon. The protein resides in the dendrite. Its subcellular location is the cytoplasm. It is found in the perinuclear region. It localises to the postsynaptic density. It carries out the reaction L-tyrosyl-[protein] + ATP = O-phospho-L-tyrosyl-[protein] + ADP + H(+). Its activity is regulated as follows. The formation of active receptors dimers able to fully transduce the ligand-mediated signal, may be negatively regulated by the formation of inactive heterodimers with the non-catalytic isoforms. The neuronal activity and the influx of calcium positively regulate the kinase activity and the internalization of the receptor which are both important for active signaling. Regulated by NGFR that may control the internalization of the receptor. NGFR may also stimulate the activation by BDNF compared to NTF3 and NTF4. SH2D1A inhibits the autophosphorylation of the receptor, and alters the recruitment and activation of downstream effectors and signaling cascades. Its function is as follows. Receptor tyrosine kinase involved in the development and the maturation of the central and the peripheral nervous systems through regulation of neuron survival, proliferation, migration, differentiation, and synapse formation and plasticity. Receptor for BDNF/brain-derived neurotrophic factor and NTF4/neurotrophin-4. Alternatively can also bind NTF3/neurotrophin-3 which is less efficient in activating the receptor but regulates neuron survival through NTRK2. Upon ligand-binding, undergoes homodimerization, autophosphorylation and activation. Recruits, phosphorylates and/or activates several downstream effectors including SHC1, FRS2, SH2B1, SH2B2 and PLCG1 that regulate distinct overlapping signaling cascades. Through SHC1, FRS2, SH2B1, SH2B2 activates the GRB2-Ras-MAPK cascade that regulates for instance neuronal differentiation including neurite outgrowth. Through the same effectors controls the Ras-PI3 kinase-AKT1 signaling cascade that mainly regulates growth and survival. Through PLCG1 and the downstream protein kinase C-regulated pathways controls synaptic plasticity. Thereby, plays a role in learning and memory by regulating both short term synaptic function and long-term potentiation. PLCG1 also leads to NF-Kappa-B activation and the transcription of genes involved in cell survival. Hence, it is able to suppress anoikis, the apoptosis resulting from loss of cell-matrix interactions. Isoform GP95-TRKB may also play a role in neutrophin-dependent calcium signaling in glial cells and mediate communication between neurons and glia. The sequence is that of BDNF/NT-3 growth factors receptor from Mus musculus (Mouse).